Consider the following 195-residue polypeptide: GTP-dependent dephospho-CoA kinase (195 aa).

The GTP site is built by D49, V50, D68, E127, and D150.

The protein belongs to the GTP-dependent DPCK family.

It carries out the reaction 3'-dephospho-CoA + GTP = GDP + CoA + H(+). The protein operates within cofactor biosynthesis; coenzyme A biosynthesis. Catalyzes the GTP-dependent phosphorylation of the 3'-hydroxyl group of dephosphocoenzyme A to form coenzyme A (CoA). The chain is GTP-dependent dephospho-CoA kinase from Methanosarcina mazei (strain ATCC BAA-159 / DSM 3647 / Goe1 / Go1 / JCM 11833 / OCM 88) (Methanosarcina frisia).